Reading from the N-terminus, the 355-residue chain is Protein RecA (355 aa).

67–74 (GPESSGKT) provides a ligand contact to ATP.

Belongs to the RecA family.

Its subcellular location is the cytoplasm. Functionally, can catalyze the hydrolysis of ATP in the presence of single-stranded DNA, the ATP-dependent uptake of single-stranded DNA by duplex DNA, and the ATP-dependent hybridization of homologous single-stranded DNAs. It interacts with LexA causing its activation and leading to its autocatalytic cleavage. The protein is Protein RecA of Shewanella baltica (strain OS195).